The following is a 662-amino-acid chain: tRNA 5-methylaminomethyl-2-thiouridine biosynthesis bifunctional protein MnmC (662 aa).

The tract at residues 1 to 245 is tRNA (mnm(5)s(2)U34)-methyltransferase; it reads MKQNAIQPAN…KREMLTGEMA (245 aa). Residues 270-662 are FAD-dependent cmnm(5)s(2)U34 oxidoreductase; that stretch reads IGGGIASALL…RKLLKGKAVK (393 aa).

In the N-terminal section; belongs to the methyltransferase superfamily. tRNA (mnm(5)s(2)U34)-methyltransferase family. The protein in the C-terminal section; belongs to the DAO family. FAD is required as a cofactor.

It is found in the cytoplasm. The enzyme catalyses 5-aminomethyl-2-thiouridine(34) in tRNA + S-adenosyl-L-methionine = 5-methylaminomethyl-2-thiouridine(34) in tRNA + S-adenosyl-L-homocysteine + H(+). Its function is as follows. Catalyzes the last two steps in the biosynthesis of 5-methylaminomethyl-2-thiouridine (mnm(5)s(2)U) at the wobble position (U34) in tRNA. Catalyzes the FAD-dependent demodification of cmnm(5)s(2)U34 to nm(5)s(2)U34, followed by the transfer of a methyl group from S-adenosyl-L-methionine to nm(5)s(2)U34, to form mnm(5)s(2)U34. This Klebsiella pneumoniae subsp. pneumoniae (strain ATCC 700721 / MGH 78578) protein is tRNA 5-methylaminomethyl-2-thiouridine biosynthesis bifunctional protein MnmC.